The sequence spans 186 residues: Peptidyl-tRNA hydrolase (186 aa).

Y14 contributes to the tRNA binding site. Catalysis depends on H19, which acts as the Proton acceptor. Positions 61, 63, and 107 each coordinate tRNA.

It belongs to the PTH family. Monomer.

The protein resides in the cytoplasm. The catalysed reaction is an N-acyl-L-alpha-aminoacyl-tRNA + H2O = an N-acyl-L-amino acid + a tRNA + H(+). In terms of biological role, hydrolyzes ribosome-free peptidyl-tRNAs (with 1 or more amino acids incorporated), which drop off the ribosome during protein synthesis, or as a result of ribosome stalling. Functionally, catalyzes the release of premature peptidyl moieties from peptidyl-tRNA molecules trapped in stalled 50S ribosomal subunits, and thus maintains levels of free tRNAs and 50S ribosomes. The chain is Peptidyl-tRNA hydrolase from Helicobacter pylori (strain G27).